The following is a 432-amino-acid chain: Peptidase B (432 aa).

Residues Lys-196 and Asp-201 each contribute to the Mn(2+) site. Lys-208 is a catalytic residue. The Mn(2+) site is built by Asp-219, Asp-278, and Glu-280. Arg-282 is a catalytic residue.

This sequence belongs to the peptidase M17 family. In terms of assembly, homohexamer. It depends on Mn(2+) as a cofactor.

It localises to the cytoplasm. The enzyme catalyses Release of an N-terminal amino acid, Xaa, from a peptide or arylamide. Xaa is preferably Glu or Asp but may be other amino acids, including Leu, Met, His, Cys and Gln.. Probably plays an important role in intracellular peptide degradation. This Vibrio vulnificus (strain CMCP6) protein is Peptidase B.